Consider the following 663-residue polypeptide: MGAVSRDDYIALCTELVEHDRRYYALNQPTISDYSYDMKMRELQEIEVQHPEWKVSWSPTMYLGDRPSGQFPVVPHSSPMLSIANVYSLQELEEFFSRTEKLLGYSPGYSLELKIDGIAVAIRYEKRLFAQALSRGNGVKGEDITANVSTIRSLPMRLPQEAPEDLEVRGEVFLSYEAFEELNACQREQGKLEFANPRNAAGGTLKLLSSKEAAKRKLDLSVYGLITDQKKRSHFENLQLCSQWGFFVAGMPKQCRSRQEVVERIREIEEMRAALPMAIDGVVIKVDNIAHQDRLGLTSKHYRWAIAYKYAPERAETILEDIVVQVGKTGILTPVAELAPVFLSGSRVSRASLYNQDEIEKKDIRIGDSVYVEKGGEVIPKIVGINLAKRSLESEPWKMPSLCPVCHEPVVKEKVSVRCINPLCSGGMLEKICFFASKSALNIDHLGEKVVTKLFEVGLISSCSDIFALTEEDLKQVPGFKDRSIQNLLASIAGAKKVALDRLLTALSIPFVGSSGAIALADHFGTLDKVIEASLDELMSIEGIGPKVAASIVAFFSKHENREEIRRMQELGVQVLSKQSDKEAPLQGKVFVLTGTLQQMTRTQAEERIRSLGGKVSSSVSKSTYAVIAGSEAGGKLKKAQDLGLSIWNESKLSRILDAKSVS.

Residues 33–37 (DYSYD), 82–83 (SI), and Glu-112 each bind NAD(+). The N6-AMP-lysine intermediate role is filled by Lys-114. Residues Arg-135, Glu-171, Lys-285, and Lys-309 each contribute to the NAD(+) site. Residues Cys-403, Cys-406, Cys-419, and Cys-424 each contribute to the Zn(2+) site. In terms of domain architecture, BRCT spans 581-663 (DKEAPLQGKV…SRILDAKSVS (83 aa)).

Belongs to the NAD-dependent DNA ligase family. LigA subfamily. Mg(2+) serves as cofactor. Requires Mn(2+) as cofactor.

It catalyses the reaction NAD(+) + (deoxyribonucleotide)n-3'-hydroxyl + 5'-phospho-(deoxyribonucleotide)m = (deoxyribonucleotide)n+m + AMP + beta-nicotinamide D-nucleotide.. In terms of biological role, DNA ligase that catalyzes the formation of phosphodiester linkages between 5'-phosphoryl and 3'-hydroxyl groups in double-stranded DNA using NAD as a coenzyme and as the energy source for the reaction. It is essential for DNA replication and repair of damaged DNA. The polypeptide is DNA ligase (Chlamydia trachomatis serovar L2 (strain ATCC VR-902B / DSM 19102 / 434/Bu)).